We begin with the raw amino-acid sequence, 67 residues long: Small ribosomal subunit protein bS21 (67 aa).

The protein belongs to the bacterial ribosomal protein bS21 family.

The polypeptide is Small ribosomal subunit protein bS21 (Nitratidesulfovibrio vulgaris (strain DSM 19637 / Miyazaki F) (Desulfovibrio vulgaris)).